We begin with the raw amino-acid sequence, 282 residues long: Acetyl-coenzyme A carboxylase carboxyl transferase subunit beta (282 aa).

Residues 28–282 (IMTKCPSCRT…TKILDIHHVS (255 aa)) enclose the CoA carboxyltransferase N-terminal domain. 4 residues coordinate Zn(2+): Cys32, Cys35, Cys51, and Cys54. A C4-type zinc finger spans residues 32-54 (CPSCRTIMYTKELKKNLYVCDSC).

The protein belongs to the AccD/PCCB family. As to quaternary structure, acetyl-CoA carboxylase is a heterohexamer composed of biotin carboxyl carrier protein (AccB), biotin carboxylase (AccC) and two subunits each of ACCase subunit alpha (AccA) and ACCase subunit beta (AccD). Zn(2+) serves as cofactor.

Its subcellular location is the cytoplasm. The enzyme catalyses N(6)-carboxybiotinyl-L-lysyl-[protein] + acetyl-CoA = N(6)-biotinyl-L-lysyl-[protein] + malonyl-CoA. It functions in the pathway lipid metabolism; malonyl-CoA biosynthesis; malonyl-CoA from acetyl-CoA: step 1/1. Its function is as follows. Component of the acetyl coenzyme A carboxylase (ACC) complex. Biotin carboxylase (BC) catalyzes the carboxylation of biotin on its carrier protein (BCCP) and then the CO(2) group is transferred by the transcarboxylase to acetyl-CoA to form malonyl-CoA. The protein is Acetyl-coenzyme A carboxylase carboxyl transferase subunit beta of Halalkalibacterium halodurans (strain ATCC BAA-125 / DSM 18197 / FERM 7344 / JCM 9153 / C-125) (Bacillus halodurans).